Reading from the N-terminus, the 221-residue chain is LHFPL tetraspan subfamily member 5 protein (221 aa).

The Cytoplasmic segment spans residues 1–24; that stretch reads MPKLLPAQEAARIYHTNYVRNARA. Residues 25–45 form a helical membrane-spanning segment; it reads MGVLWALFTLCFSILMVVTFI. Residues 46–98 lie on the Extracellular side of the membrane; it reads QPYWIGDSIDTPQAGYFGLFSYCIGNALTGELICKGSPLDFGTIPSSAFKTAM. Residues 99-119 traverse the membrane as a helical segment; it reads FFVGISTFLIIGSILCFSLFF. Topologically, residues 120–128 are cytoplasmic; the sequence is FCNAATVYK. The helical transmembrane segment at 129-149 threads the bilayer; it reads VCAWMQLAAATGLMIGCLIYP. The Extracellular segment spans residues 150–179; the sequence is DGWDSSEVKRMCGDKTDKYTLGACTVRWAY. The chain crosses the membrane as a helical span at residues 180–200; that stretch reads ILCIIGILDALILSFLAFVLG. Topologically, residues 201–221 are cytoplasmic; it reads NRQDNLLPSDFKVESKEEGNE.

The protein belongs to the LHFP family.

The protein localises to the cell membrane. Probable component of the mechanotransducer (MET) non-specific cation channel complex. This Gallus gallus (Chicken) protein is LHFPL tetraspan subfamily member 5 protein.